A 593-amino-acid chain; its full sequence is ATP-dependent lipid A-core flippase (593 aa).

6 helical membrane-spanning segments follow: residues isoleucine 33 to isoleucine 53, tryptophan 75 to serine 95, alanine 137 to valine 157, isoleucine 164 to isoleucine 184, glutamine 262 to valine 282, and glycine 292 to isoleucine 312. The ABC transmembrane type-1 domain occupies valine 37–arginine 320. Residues isoleucine 352–isoleucine 586 form the ABC transporter domain. Glycine 386–threonine 393 contacts ATP.

The protein belongs to the ABC transporter superfamily. Lipid exporter (TC 3.A.1.106) family. As to quaternary structure, homodimer.

It is found in the cell inner membrane. It catalyses the reaction ATP + H2O + lipid A-core oligosaccharideSide 1 = ADP + phosphate + lipid A-core oligosaccharideSide 2.. In terms of biological role, involved in lipopolysaccharide (LPS) biosynthesis. Translocates lipid A-core from the inner to the outer leaflet of the inner membrane. Transmembrane domains (TMD) form a pore in the inner membrane and the ATP-binding domain (NBD) is responsible for energy generation. This chain is ATP-dependent lipid A-core flippase, found in Burkholderia orbicola (strain AU 1054).